The chain runs to 306 residues: Ribonuclease Z (306 aa).

Histidine 63, histidine 65, aspartate 67, histidine 68, histidine 142, aspartate 213, and histidine 271 together coordinate Zn(2+). Catalysis depends on aspartate 67, which acts as the Proton acceptor.

It belongs to the RNase Z family. In terms of assembly, homodimer. Requires Zn(2+) as cofactor.

The enzyme catalyses Endonucleolytic cleavage of RNA, removing extra 3' nucleotides from tRNA precursor, generating 3' termini of tRNAs. A 3'-hydroxy group is left at the tRNA terminus and a 5'-phosphoryl group is left at the trailer molecule.. Functionally, zinc phosphodiesterase, which displays some tRNA 3'-processing endonuclease activity. Probably involved in tRNA maturation, by removing a 3'-trailer from precursor tRNA. This is Ribonuclease Z from Oceanobacillus iheyensis (strain DSM 14371 / CIP 107618 / JCM 11309 / KCTC 3954 / HTE831).